The sequence spans 136 residues: Large-conductance mechanosensitive channel (136 aa).

2 helical membrane passes run 9 to 29 (AFAV…GAAF) and 78 to 98 (FIQT…GVKA).

Belongs to the MscL family. Homopentamer.

It localises to the cell inner membrane. Functionally, channel that opens in response to stretch forces in the membrane lipid bilayer. May participate in the regulation of osmotic pressure changes within the cell. This Azotobacter vinelandii (strain DJ / ATCC BAA-1303) protein is Large-conductance mechanosensitive channel.